The following is a 395-amino-acid chain: Acetate kinase (395 aa).

N8 serves as a coordination point for Mg(2+). ATP is bound at residue K15. R94 contacts substrate. The Proton donor/acceptor role is filled by D151. ATP-binding positions include 210 to 214 (HLGNG), 284 to 286 (DMR), and 329 to 333 (GIGEN). E382 contributes to the Mg(2+) binding site.

This sequence belongs to the acetokinase family. Homodimer. It depends on Mg(2+) as a cofactor. Mn(2+) is required as a cofactor.

Its subcellular location is the cytoplasm. The enzyme catalyses acetate + ATP = acetyl phosphate + ADP. The protein operates within metabolic intermediate biosynthesis; acetyl-CoA biosynthesis; acetyl-CoA from acetate: step 1/2. Its function is as follows. Catalyzes the formation of acetyl phosphate from acetate and ATP. Can also catalyze the reverse reaction. The protein is Acetate kinase of Protochlamydia amoebophila (strain UWE25).